Here is a 484-residue protein sequence, read N- to C-terminus: Glycogen synthase (484 aa).

Lys-15 contacts ADP-alpha-D-glucose.

The protein belongs to the glycosyltransferase 1 family. Bacterial/plant glycogen synthase subfamily.

The enzyme catalyses [(1-&gt;4)-alpha-D-glucosyl](n) + ADP-alpha-D-glucose = [(1-&gt;4)-alpha-D-glucosyl](n+1) + ADP + H(+). Its pathway is glycan biosynthesis; glycogen biosynthesis. Synthesizes alpha-1,4-glucan chains using ADP-glucose. This is Glycogen synthase from Geotalea uraniireducens (strain Rf4) (Geobacter uraniireducens).